Here is a 101-residue protein sequence, read N- to C-terminus: Protein Tat (101 aa).

Basic and acidic residues predominate over residues Met-1–Lys-12. The interval Met-1–Thr-20 is disordered. Positions Met-1–Thr-24 are interaction with human CREBBP. The interval Met-1–Gly-48 is transactivation. Cys-22, Cys-25, and Cys-27 together coordinate Zn(2+). The interval Cys-22–Cys-37 is cysteine-rich. Lys-28 carries the N6-acetyllysine; by host PCAF modification. Residues Cys-30, His-33, Cys-34, and Cys-37 each coordinate Zn(2+). The segment at Phe-38 to Gly-48 is core. The interval Tyr-47–Asp-101 is disordered. The short motif at Arg-49–Arg-57 is the Nuclear localization signal, RNA-binding (TAR), and protein transduction element. Residues Arg-49–Glu-86 are interaction with the host capping enzyme RNGTT. N6-acetyllysine; by host EP300 and GCN5L2 occurs at positions 50 and 51. An asymmetric dimethylarginine; by host PRMT6 mark is found at Arg-52 and Arg-53. A Glycyl lysine isopeptide (Lys-Gly) (interchain with G-Cter in ubiquitin) cross-link involves residue Lys-71. The short motif at Arg-78 to Asp-80 is the Cell attachment site element. Positions Gly-83–Asp-101 are enriched in basic and acidic residues.

It belongs to the lentiviruses Tat family. As to quaternary structure, interacts with host CCNT1. Associates with the P-TEFb complex composed at least of Tat, P-TEFb (CDK9 and CCNT1), TAR RNA, RNA Pol II. Recruits the HATs CREBBP, TAF1/TFIID, EP300, PCAF and GCN5L2. Interacts with host KAT5/Tip60; this interaction targets the latter to degradation. Interacts with the host deacetylase SIRT1. Interacts with host capping enzyme RNGTT; this interaction stimulates RNGTT. Binds to host KDR, and to the host integrins ITGAV/ITGB3 and ITGA5/ITGB1. Interacts with host KPNB1/importin beta-1 without previous binding to KPNA1/importin alpha-1. Interacts with EIF2AK2. Interacts with host nucleosome assembly protein NAP1L1; this interaction may be required for the transport of Tat within the nucleus, since the two proteins interact at the nuclear rim. Interacts with host C1QBP/SF2P32; this interaction involves lysine-acetylated Tat. Interacts with the host chemokine receptors CCR2, CCR3 and CXCR4. Interacts with host DPP4/CD26; this interaction may trigger an anti-proliferative effect. Interacts with host LDLR. Interacts with the host extracellular matrix metalloproteinase MMP1. Interacts with host PRMT6; this interaction mediates Tat's methylation. Interacts with, and is ubiquitinated by MDM2/Hdm2. Interacts with host PSMC3 and HTATIP2. Interacts with STAB1; this interaction may overcome SATB1-mediated repression of IL2 and IL2RA (interleukin) in T cells by binding to the same domain than HDAC1. Interacts (when acetylated) with human CDK13, thereby increasing HIV-1 mRNA splicing and promoting the production of the doubly spliced HIV-1 protein Nef. Interacts with host TBP; this interaction modulates the activity of transcriptional pre-initiation complex. Interacts with host RELA. Interacts with host PLSCR1; this interaction negatively regulates Tat transactivation activity by altering its subcellular distribution. Asymmetrical arginine methylation by host PRMT6 seems to diminish the transactivation capacity of Tat and affects the interaction with host CCNT1. Post-translationally, acetylation by EP300, CREBBP, GCN5L2/GCN5 and PCAF regulates the transactivation activity of Tat. EP300-mediated acetylation of Lys-50 promotes dissociation of Tat from the TAR RNA through the competitive binding to PCAF's bromodomain. In addition, the non-acetylated Tat's N-terminus can also interact with PCAF. PCAF-mediated acetylation of Lys-28 enhances Tat's binding to CCNT1. Lys-50 is deacetylated by SIRT1. In terms of processing, polyubiquitination by host MDM2 does not target Tat to degradation, but activates its transactivation function and fosters interaction with CCNT1 and TAR RNA. Phosphorylated by EIF2AK2 on serine and threonine residues adjacent to the basic region important for TAR RNA binding and function. Phosphorylation of Tat by EIF2AK2 is dependent on the prior activation of EIF2AK2 by dsRNA.

The protein localises to the host nucleus. Its subcellular location is the host nucleolus. The protein resides in the host cytoplasm. It localises to the secreted. Functionally, transcriptional activator that increases RNA Pol II processivity, thereby increasing the level of full-length viral transcripts. Recognizes a hairpin structure at the 5'-LTR of the nascent viral mRNAs referred to as the transactivation responsive RNA element (TAR) and recruits the cyclin T1-CDK9 complex (P-TEFb complex) that will in turn hyperphosphorylate the RNA polymerase II to allow efficient elongation. The CDK9 component of P-TEFb and other Tat-activated kinases hyperphosphorylate the C-terminus of RNA Pol II that becomes stabilized and much more processive. Other factors such as HTATSF1/Tat-SF1, SUPT5H/SPT5, and HTATIP2 are also important for Tat's function. Besides its effect on RNA Pol II processivity, Tat induces chromatin remodeling of proviral genes by recruiting the histone acetyltransferases (HATs) CREBBP, EP300 and PCAF to the chromatin. This also contributes to the increase in proviral transcription rate, especially when the provirus integrates in transcriptionally silent region of the host genome. To ensure maximal activation of the LTR, Tat mediates nuclear translocation of NF-kappa-B by interacting with host RELA. Through its interaction with host TBP, Tat may also modulate transcription initiation. Tat can reactivate a latently infected cell by penetrating in it and transactivating its LTR promoter. In the cytoplasm, Tat is thought to act as a translational activator of HIV-1 mRNAs. In terms of biological role, extracellular circulating Tat can be endocytosed by surrounding uninfected cells via the binding to several surface receptors such as CD26, CXCR4, heparan sulfate proteoglycans (HSPG) or LDLR. Neurons are rarely infected, but they internalize Tat via their LDLR. Through its interaction with nuclear HATs, Tat is potentially able to control the acetylation-dependent cellular gene expression. Modulates the expression of many cellular genes involved in cell survival, proliferation or in coding for cytokines or cytokine receptors. Tat plays a role in T-cell and neurons apoptosis. Tat induced neurotoxicity and apoptosis probably contribute to neuroAIDS. Circulating Tat also acts as a chemokine-like and/or growth factor-like molecule that binds to specific receptors on the surface of the cells, affecting many cellular pathways. In the vascular system, Tat binds to ITGAV/ITGB3 and ITGA5/ITGB1 integrins dimers at the surface of endothelial cells and competes with bFGF for heparin-binding sites, leading to an excess of soluble bFGF. The sequence is that of Protein Tat from Human immunodeficiency virus type 1 group M subtype B (isolate MN) (HIV-1).